Here is a 506-residue protein sequence, read N- to C-terminus: Maturase K (506 aa).

The protein belongs to the intron maturase 2 family. MatK subfamily.

The protein localises to the plastid. It localises to the chloroplast. Usually encoded in the trnK tRNA gene intron. Probably assists in splicing its own and other chloroplast group II introns. The chain is Maturase K from Melilotus indicus (Sourclover).